Reading from the N-terminus, the 700-residue chain is Elongation factor G (700 aa).

Positions 10 to 285 (DRTRNIGIMA…AVIDYLPSPL (276 aa)) constitute a tr-type G domain. GTP-binding positions include 19 to 26 (AHIDAGKT), 83 to 87 (DTPGH), and 137 to 140 (NKMD).

This sequence belongs to the TRAFAC class translation factor GTPase superfamily. Classic translation factor GTPase family. EF-G/EF-2 subfamily.

Its subcellular location is the cytoplasm. In terms of biological role, catalyzes the GTP-dependent ribosomal translocation step during translation elongation. During this step, the ribosome changes from the pre-translocational (PRE) to the post-translocational (POST) state as the newly formed A-site-bound peptidyl-tRNA and P-site-bound deacylated tRNA move to the P and E sites, respectively. Catalyzes the coordinated movement of the two tRNA molecules, the mRNA and conformational changes in the ribosome. The chain is Elongation factor G from Lacticaseibacillus paracasei (strain ATCC 334 / BCRC 17002 / CCUG 31169 / CIP 107868 / KCTC 3260 / NRRL B-441) (Lactobacillus paracasei).